A 281-amino-acid polypeptide reads, in one-letter code: Putative phosphatase/phosphodiesterase MPN_349 (281 aa).

The Fe cation site is built by aspartate 12, glutamate 43, asparagine 44, and asparagine 71. Histidine 72 (proton donor) is an active-site residue. Histidine 158, histidine 183, and histidine 185 together coordinate Fe cation.

This sequence belongs to the YmdB-like family. Requires Fe(3+) as cofactor.

The polypeptide is Putative phosphatase/phosphodiesterase MPN_349 (Mycoplasma pneumoniae (strain ATCC 29342 / M129 / Subtype 1) (Mycoplasmoides pneumoniae)).